A 119-amino-acid polypeptide reads, in one-letter code: Protein FATTY ACID EXPORT 6 (119 aa).

The next 3 helical transmembrane spans lie at 27–47 (SITS…AGYI), 57–77 (NSTI…LVMG), and 84–104 (GKIM…CFYV).

This sequence belongs to the TMEM14 family.

It is found in the membrane. Functionally, may be involved in free fatty acids export. This Arabidopsis thaliana (Mouse-ear cress) protein is Protein FATTY ACID EXPORT 6.